The chain runs to 156 residues: MSWSKVKYFFFDTPEEKEAAQYGYEKEQTDMKKQQDPPEQQDVTFPKAQPKQNVVSIETAKQSSKVVLLEPRTYSEAQGIADHLKGRRAVVINLQRMSTDQAVRIVDFLSGTVYAIGGDIQKIGPKTFMCTPENVDIVGAISELFGEEEETNIKRW.

The span at 20 to 36 shows a compositional bias: basic and acidic residues; the sequence is AQYGYEKEQTDMKKQQD. Positions 20–50 are disordered; it reads AQYGYEKEQTDMKKQQDPPEQQDVTFPKAQP.

This sequence belongs to the SepF family. As to quaternary structure, homodimer. Interacts with FtsZ.

It localises to the cytoplasm. In terms of biological role, cell division protein that is part of the divisome complex and is recruited early to the Z-ring. Probably stimulates Z-ring formation, perhaps through the cross-linking of FtsZ protofilaments. Its function overlaps with FtsA. This is Cell division protein SepF from Bacillus cereus (strain G9842).